Reading from the N-terminus, the 429-residue chain is Glucose-6-phosphate isomerase (429 aa).

The active-site Proton donor is Glu-282. Active-site residues include His-303 and Lys-418.

The protein belongs to the GPI family.

It is found in the cytoplasm. It catalyses the reaction alpha-D-glucose 6-phosphate = beta-D-fructose 6-phosphate. The protein operates within carbohydrate biosynthesis; gluconeogenesis. It functions in the pathway carbohydrate degradation; glycolysis; D-glyceraldehyde 3-phosphate and glycerone phosphate from D-glucose: step 2/4. In terms of biological role, catalyzes the reversible isomerization of glucose-6-phosphate to fructose-6-phosphate. In Mesomycoplasma hyopneumoniae (strain J / ATCC 25934 / NCTC 10110) (Mycoplasma hyopneumoniae), this protein is Glucose-6-phosphate isomerase.